Here is a 284-residue protein sequence, read N- to C-terminus: Bifunctional protein FolD (284 aa).

NADP(+) is bound by residues 166 to 168 (GAS) and Ile232.

The protein belongs to the tetrahydrofolate dehydrogenase/cyclohydrolase family. In terms of assembly, homodimer.

The enzyme catalyses (6R)-5,10-methylene-5,6,7,8-tetrahydrofolate + NADP(+) = (6R)-5,10-methenyltetrahydrofolate + NADPH. It carries out the reaction (6R)-5,10-methenyltetrahydrofolate + H2O = (6R)-10-formyltetrahydrofolate + H(+). The protein operates within one-carbon metabolism; tetrahydrofolate interconversion. In terms of biological role, catalyzes the oxidation of 5,10-methylenetetrahydrofolate to 5,10-methenyltetrahydrofolate and then the hydrolysis of 5,10-methenyltetrahydrofolate to 10-formyltetrahydrofolate. In Glaesserella parasuis serovar 5 (strain SH0165) (Haemophilus parasuis), this protein is Bifunctional protein FolD.